A 394-amino-acid polypeptide reads, in one-letter code: Ornithine aminotransferase 1 (394 aa).

K252 is modified (N6-(pyridoxal phosphate)lysine).

This sequence belongs to the class-III pyridoxal-phosphate-dependent aminotransferase family. OAT subfamily. Pyridoxal 5'-phosphate serves as cofactor.

Its subcellular location is the cytoplasm. It catalyses the reaction a 2-oxocarboxylate + L-ornithine = L-glutamate 5-semialdehyde + an L-alpha-amino acid. It participates in amino-acid biosynthesis; L-proline biosynthesis; L-glutamate 5-semialdehyde from L-ornithine: step 1/1. Its function is as follows. Catalyzes the interconversion of ornithine to glutamate semialdehyde. In Staphylococcus aureus (strain MRSA252), this protein is Ornithine aminotransferase 1.